Here is a 284-residue protein sequence, read N- to C-terminus: Lipase chaperone (284 aa).

Residues 4–24 (IAWSLGILVTIGALCAIVWPS) traverse the membrane as a helical segment.

The protein belongs to the lipase chaperone family.

It is found in the cell inner membrane. In terms of biological role, may be involved in the folding of the extracellular lipase during its passage through the periplasm. The chain is Lipase chaperone (lifO) from Vibrio cholerae serotype O1 (strain ATCC 39315 / El Tor Inaba N16961).